The primary structure comprises 435 residues: Putative FBD-associated F-box protein At5g56820 (435 aa).

One can recognise an F-box domain in the interval 14–60 (SDRISYLPDDLLLRILSFIHTSDAISTSLLSKRWKFVWKMMPTLDLD). Residues 341 to 390 (VRKPNSVPECLTFHLETLEWQGYAGRPEDKEIAVYILGNALRLNTATISR) enclose the FBD domain.

In Arabidopsis thaliana (Mouse-ear cress), this protein is Putative FBD-associated F-box protein At5g56820.